The chain runs to 607 residues: DNA mismatch repair protein MutL (607 aa).

Belongs to the DNA mismatch repair MutL/HexB family.

In terms of biological role, this protein is involved in the repair of mismatches in DNA. It is required for dam-dependent methyl-directed DNA mismatch repair. May act as a 'molecular matchmaker', a protein that promotes the formation of a stable complex between two or more DNA-binding proteins in an ATP-dependent manner without itself being part of a final effector complex. The chain is DNA mismatch repair protein MutL from Paramagnetospirillum magneticum (strain ATCC 700264 / AMB-1) (Magnetospirillum magneticum).